A 380-amino-acid polypeptide reads, in one-letter code: Actinidain (380 aa).

The N-terminal stretch at Met-1–Ala-24 is a signal peptide. Positions Phe-25 to Val-126 are cleaved as a propeptide — activation peptide. Residues Asn-29, Asn-81, and Asn-111 are each glycosylated (N-linked (GlcNAc...) asparagine). 3 disulfide bridges follow: Cys-148–Cys-191, Cys-182–Cys-224, and Cys-282–Cys-332. Residue Cys-151 is part of the active site. Active-site residues include His-288 and Asn-308.

It belongs to the peptidase C1 family. In terms of tissue distribution, fruit, present in small cells of the outer pericarp of mature fruit, but not large cells.

It catalyses the reaction Specificity close to that of papain.. Functionally, cysteine protease responsible for the cleavage of kiwellin into kissper and KiTH. This Actinidia deliciosa (Kiwi) protein is Actinidain.